A 1214-amino-acid polypeptide reads, in one-letter code: Peregrin (1214 aa).

The segment at 21–47 adopts a C2H2-type zinc-finger fold; it reads YECPVETCRKVYKSYSGIEYHLYHYDH. Disordered regions lie at residues 43-87 and 118-177; these read YHYD…SPGR and VVSE…PKLP. Basic residues predominate over residues 58 to 67; that stretch reads LRKHKKKGRQ. The segment at 59–222 is interaction with KAT6A and KAT6B; the sequence is RKHKKKGRQS…VEYDMDEEDY (164 aa). Residues 74 to 85 show a composition bias toward low complexity; the sequence is QSPSPSEVSQSP. The segment covering 119–130 has biased composition (acidic residues); sequence VSEDEEAPEEAP. Ser-120 is modified (phosphoserine). The residue at position 147 (Lys-147) is an N6-acetyllysine. Basic residues predominate over residues 148–167; that stretch reads SGKHKNKEKRKDSNHHHHHN. Ser-238 is subject to Phosphoserine. A PHD-type 1 zinc finger spans residues 273 to 323; it reads DAVCCICNDGECQNSNVILFCDMCNLAVHQECYGVPYIPEGQWLCRRCLQS. Residues 327 to 360 form a C2HC pre-PHD-type zinc finger; it reads AVDCALCPNKGGAFKQTDDGRWAHVVCALWIPEV. The segment at 384–448 adopts a PHD-type 2 zinc-finger fold; the sequence is LTCYICKQRG…RKTAYCDIHT (65 aa). The interval 448 to 489 is disordered; it reads TPPGSARRLPALSHSEGEEDEDEEEDEGKGWSSEKVKKAKAK. Residues Ser-460 and Ser-462 each carry the phosphoserine modification. The span at 464-474 shows a compositional bias: acidic residues; the sequence is GEEDEDEEEDE. The interaction with MEAF6 and ING5 stretch occupies residues 501 to 821; sequence LAEKRAAAPV…IKKEMTALRR (321 aa). The interval 543-1079 is required for RUNX1 and RUNX2 transcriptional activation; that stretch reads YWTLKRQSRN…RGAGWLSEDE (537 aa). The residue at position 580 (Lys-580) is an N6-acetyllysine. The Bromo domain maps to 628–732; it reads MQLTPFLILL…EQGGAVLRQA (105 aa). A disordered region spans residues 819 to 1062; the sequence is LRRKLAHQRE…VGTGRGVGHS (244 aa). A compositionally biased stretch (basic and acidic residues) spans 825-838; sequence HQRETGRDGPERHG. Thr-858 carries the post-translational modification Phosphothreonine. Positions 858 to 871 are enriched in low complexity; that stretch reads TDSAAEESSSQETS. Phosphoserine is present on residues Ser-860, Ser-917, Ser-922, and Ser-926. Over residues 993–1021 the composition is skewed to low complexity; the sequence is SLPRSSSDSESSSSSSSSAASDRTSTTPS. The residue at position 1076 (Ser-1076) is a Phosphoserine. The region spanning 1085 to 1168 is the PWWP domain; that stretch reads ALDLVWAKCR…RTKLVPLGVN (84 aa). Ser-1187 carries the phosphoserine modification.

In terms of assembly, component of some HBO1 complex composed of KAT7/HBO1, MEAF6, ING5, and BRPF1. Component of the MOZ/MORF complex composed at least of ING5, KAT6A, KAT6B, MEAF6 and one of BRPF1, BRD1/BRPF2 and BRPF3. Interacts (via PHD-type zinc finger domains) with unmethylated histone H3 at 'Lys-4' (H3K4me0). Interacts with trimethylated 'Lys-36' of histone H3 (H3K36me3). Interacts with ING5; interaction directs BRPF1 to H4K4me3-enriched chromatin at the 5' of active genes. Interacts with KAT7. In terms of processing, acetylated by KAT6A. As to expression, high levels in testis.

The protein localises to the nucleus. It localises to the chromosome. The protein resides in the cytoplasm. Functionally, scaffold subunit of various histone acetyltransferase (HAT) complexes, such as the MOZ/MORF and HBO1 complexes, which have a histone H3 acetyltransferase activity. Plays a key role in HBO1 complex by directing KAT7/HBO1 specificity towards histone H3 'Lys-14' acetylation (H3K14ac). Some HAT complexes preferentially mediate histone H3 'Lys-23' (H3K23ac) acetylation. Positively regulates the transcription of RUNX1 and RUNX2. The sequence is that of Peregrin from Homo sapiens (Human).